A 348-amino-acid polypeptide reads, in one-letter code: 4-hydroxy-2-oxovalerate aldolase 1 (348 aa).

The Pyruvate carboxyltransferase domain occupies 8–260 (ITVHDMTLRD…QTGVDVWAIQ (253 aa)). 16-17 (RD) provides a ligand contact to substrate. A Mn(2+)-binding site is contributed by aspartate 17. The active-site Proton acceptor is histidine 20. 2 residues coordinate substrate: serine 170 and histidine 199. The Mn(2+) site is built by histidine 199 and histidine 201. A substrate-binding site is contributed by tyrosine 290.

The protein belongs to the 4-hydroxy-2-oxovalerate aldolase family.

The catalysed reaction is (S)-4-hydroxy-2-oxopentanoate = acetaldehyde + pyruvate. In Cupriavidus metallidurans (strain ATCC 43123 / DSM 2839 / NBRC 102507 / CH34) (Ralstonia metallidurans), this protein is 4-hydroxy-2-oxovalerate aldolase 1.